Reading from the N-terminus, the 215-residue chain is BAG family molecular chaperone regulator 5, mitochondrial (215 aa).

The N-terminal 14 residues, 1-14, are a transit peptide targeting the mitochondrion; that stretch reads MKRSRKFSSSTTTT. Residues 50–79 enclose the IQ domain; it reads ATAAAARIQSGYRSYRIRNLYKKISSINRE. The 78-residue stretch at 72-149 folds into the BAG domain; the sequence is KISSINREAN…GMQEILDSIS (78 aa).

As to quaternary structure, binds to the ATPase domain of HSP70/HSC70 chaperones. Interacts with HSP70-1.

Its subcellular location is the mitochondrion. Co-chaperone that regulates diverse cellular pathways, such as programmed cell death and stress responses. This is BAG family molecular chaperone regulator 5, mitochondrial (BAG5) from Arabidopsis thaliana (Mouse-ear cress).